A 653-amino-acid chain; its full sequence is Probable syringafactin export ATP-binding/permease protein SyfD (653 aa).

The region spanning 6 to 244 is the ABC transporter domain; the sequence is LELNGVTRRF…NEKTTERLPT (239 aa). Residue 42–49 participates in ATP binding; the sequence is GASGSGKS. 5 helical membrane passes run 252 to 272, 278 to 298, 526 to 546, 583 to 603, and 616 to 636; these read LMAN…ALIS, LLTM…VAIG, LALL…IGVM, MVCL…GYVF, and LGSI…FGFV.

The protein belongs to the ABC transporter superfamily. Macrolide exporter (TC 3.A.1.122) family. Probably part of a tripartite efflux system, which is composed of an inner membrane transporter, a periplasmic membrane fusion protein, and an outer membrane component.

The protein localises to the cell inner membrane. Functionally, probably involved in the export of syringafactins. This chain is Probable syringafactin export ATP-binding/permease protein SyfD, found in Pseudomonas syringae pv. syringae (strain B728a).